The sequence spans 292 residues: Poly(U)-specific endoribonuclease-A (292 aa).

The region spanning 8 to 285 (LNHELSKLFN…IGTAYPVLLS (278 aa)) is the EndoU domain. Catalysis depends on residues His-162, His-178, and Lys-224.

It belongs to the ENDOU family. Monomer. The cofactor is Mn(2+).

The protein localises to the nucleus. It carries out the reaction uridylyl-uridylyl-ribonucleotide-RNA = a 3'-end uridylyl-2',3'-cyclophospho-uridine-RNA + a 5'-end dephospho-ribonucleoside-RNA. Poly(U)-specific endoribonuclease involved in the processing of intron-encoded box C/D snoRNAs, such as U16 and U86. Releases products that have 2',3'-cyclic phosphate termini at the 3'-end. The protein is Poly(U)-specific endoribonuclease-A (endou-a) of Xenopus laevis (African clawed frog).